The following is a 176-amino-acid chain: uncharacterized protein (176 aa).

Positions 1 to 22 (MKYNNIIFLGLCLGLTTYSALS) are cleaved as a signal peptide. C38 and C78 are disulfide-bonded.

This sequence belongs to the fimbrial protein family.

The protein localises to the fimbrium. This is an uncharacterized protein from Escherichia coli (strain K12).